The chain runs to 546 residues: CTP synthase (546 aa).

Residues 1–269 (MNSNTKIIFV…DAKLVELLNL (269 aa)) form an amidoligase domain region. Position 16 (Ser-16) interacts with CTP. Ser-16 is a binding site for UTP. ATP-binding positions include 17 to 22 (SLGKGV) and Asp-74. Residues Asp-74 and Glu-143 each contribute to the Mg(2+) site. Residues 150 to 152 (DIE), 190 to 195 (KTKPTQ), and Lys-226 contribute to the CTP site. Residues 190-195 (KTKPTQ) and Lys-226 each bind UTP. One can recognise a Glutamine amidotransferase type-1 domain in the interval 294–546 (TIAMVGKYVS…IQAAIENSNN (253 aa)). An L-glutamine-binding site is contributed by Gly-356. The active-site Nucleophile; for glutamine hydrolysis is the Cys-383. L-glutamine-binding positions include 384–387 (LGMQ), Glu-407, and Arg-474. Residues His-519 and Glu-521 contribute to the active site.

This sequence belongs to the CTP synthase family. Homotetramer.

The catalysed reaction is UTP + L-glutamine + ATP + H2O = CTP + L-glutamate + ADP + phosphate + 2 H(+). The enzyme catalyses L-glutamine + H2O = L-glutamate + NH4(+). It carries out the reaction UTP + NH4(+) + ATP = CTP + ADP + phosphate + 2 H(+). It functions in the pathway pyrimidine metabolism; CTP biosynthesis via de novo pathway; CTP from UDP: step 2/2. Allosterically activated by GTP, when glutamine is the substrate; GTP has no effect on the reaction when ammonia is the substrate. The allosteric effector GTP functions by stabilizing the protein conformation that binds the tetrahedral intermediate(s) formed during glutamine hydrolysis. Inhibited by the product CTP, via allosteric rather than competitive inhibition. In terms of biological role, catalyzes the ATP-dependent amination of UTP to CTP with either L-glutamine or ammonia as the source of nitrogen. Regulates intracellular CTP levels through interactions with the four ribonucleotide triphosphates. This is CTP synthase from Francisella tularensis subsp. tularensis (strain FSC 198).